Reading from the N-terminus, the 212-residue chain is ATP phosphoribosyltransferase (212 aa).

It belongs to the ATP phosphoribosyltransferase family. Short subfamily. As to quaternary structure, heteromultimer composed of HisG and HisZ subunits.

It localises to the cytoplasm. The catalysed reaction is 1-(5-phospho-beta-D-ribosyl)-ATP + diphosphate = 5-phospho-alpha-D-ribose 1-diphosphate + ATP. Its pathway is amino-acid biosynthesis; L-histidine biosynthesis; L-histidine from 5-phospho-alpha-D-ribose 1-diphosphate: step 1/9. Functionally, catalyzes the condensation of ATP and 5-phosphoribose 1-diphosphate to form N'-(5'-phosphoribosyl)-ATP (PR-ATP). Has a crucial role in the pathway because the rate of histidine biosynthesis seems to be controlled primarily by regulation of HisG enzymatic activity. The sequence is that of ATP phosphoribosyltransferase from Albidiferax ferrireducens (strain ATCC BAA-621 / DSM 15236 / T118) (Rhodoferax ferrireducens).